The primary structure comprises 348 residues: DnaJ homolog subfamily B member 5 (348 aa).

In terms of domain architecture, J spans Asp4–Gly68.

This chain is DnaJ homolog subfamily B member 5 (DNAJB5), found in Bos taurus (Bovine).